A 218-amino-acid polypeptide reads, in one-letter code: 3,4-dihydroxy-2-butanone 4-phosphate synthase (218 aa).

Residues 38–39 (RE), aspartate 43, 151–155 (RRGHT), and glutamate 175 contribute to the D-ribulose 5-phosphate site. A Mg(2+)-binding site is contributed by glutamate 39. Residue histidine 154 coordinates Mg(2+).

Belongs to the DHBP synthase family. Homodimer. Requires Mg(2+) as cofactor. Mn(2+) is required as a cofactor.

The catalysed reaction is D-ribulose 5-phosphate = (2S)-2-hydroxy-3-oxobutyl phosphate + formate + H(+). The protein operates within cofactor biosynthesis; riboflavin biosynthesis; 2-hydroxy-3-oxobutyl phosphate from D-ribulose 5-phosphate: step 1/1. Catalyzes the conversion of D-ribulose 5-phosphate to formate and 3,4-dihydroxy-2-butanone 4-phosphate. The chain is 3,4-dihydroxy-2-butanone 4-phosphate synthase from Shewanella frigidimarina (strain NCIMB 400).